A 270-amino-acid polypeptide reads, in one-letter code: Phosphatidate cytidylyltransferase (270 aa).

The next 7 helical transmembrane spans lie at Leu-19–Ala-39, Thr-53–Leu-73, Gly-76–Trp-96, Gly-101–Arg-121, Phe-126–Tyr-146, Leu-183–Leu-203, and Ala-248–Phe-268.

It belongs to the CDS family.

It is found in the cell inner membrane. The catalysed reaction is a 1,2-diacyl-sn-glycero-3-phosphate + CTP + H(+) = a CDP-1,2-diacyl-sn-glycerol + diphosphate. It functions in the pathway phospholipid metabolism; CDP-diacylglycerol biosynthesis; CDP-diacylglycerol from sn-glycerol 3-phosphate: step 3/3. This Brucella suis biovar 1 (strain 1330) protein is Phosphatidate cytidylyltransferase (cdsA).